Reading from the N-terminus, the 175-residue chain is ATP synthase subunit b (175 aa).

A helical membrane pass occupies residues 14–34 (LNPNPGLIFWTALTFLIVLVI).

This sequence belongs to the ATPase B chain family. F-type ATPases have 2 components, F(1) - the catalytic core - and F(0) - the membrane proton channel. F(1) has five subunits: alpha(3), beta(3), gamma(1), delta(1), epsilon(1). F(0) has four main subunits: a(1), b(2) and c(10-14). The alpha and beta chains form an alternating ring which encloses part of the gamma chain. F(1) is attached to F(0) by a central stalk formed by the gamma and epsilon chains, while a peripheral stalk is formed by the delta and b chains.

It localises to the cell inner membrane. F(1)F(0) ATP synthase produces ATP from ADP in the presence of a proton or sodium gradient. F-type ATPases consist of two structural domains, F(1) containing the extramembraneous catalytic core and F(0) containing the membrane proton channel, linked together by a central stalk and a peripheral stalk. During catalysis, ATP synthesis in the catalytic domain of F(1) is coupled via a rotary mechanism of the central stalk subunits to proton translocation. In terms of biological role, component of the F(0) channel, it forms part of the peripheral stalk, linking F(1) to F(0). This chain is ATP synthase subunit b, found in Chlorobaculum tepidum (strain ATCC 49652 / DSM 12025 / NBRC 103806 / TLS) (Chlorobium tepidum).